A 166-amino-acid chain; its full sequence is MMLHSALGLCLLLVTVSSNLAIAIKKEKRPPQTLSRGWGDDITWVQTYEEGLFYAQKSKKPLMVIHHLEDCQYSQALKKVFAQNEEIQEMAQNKFIMLNLMHETTDKNLSPDGQYVPRIMFVDPSLTVRADIAGRYSNRLYTYEPRDLPLLIENMKKALRLIQSEL.

Positions 1-21 (MMLHSALGLCLLLVTVSSNLA) are cleaved as a signal peptide. The Prevents secretion from ER signature appears at 163 to 166 (QSEL).

This sequence belongs to the AGR family. In terms of assembly, interacts with LYPD3 and DAG1 (alphaDAG1). In terms of tissue distribution, expressed in the lung, in the ciliated cells of the airway epithelium. Expression increased with differentiation of airway epithelial cells. Not detected in the mucous cells. Expressed in ciliated cells in the oviduct. Also detected in stomach, colon, prostate and liver. Expressed in breast, ovary, prostate and liver cancer. Expression is associated with the level of differentiation of breast cancer (at protein level).

Its subcellular location is the endoplasmic reticulum. In terms of biological role, required for calcium-mediated regulation of ciliary beat frequency and mucociliary clearance in the airway. Might be involved in the regulation of intracellular calcium in tracheal epithelial cells. This Homo sapiens (Human) protein is Anterior gradient protein 3 (AGR3).